Consider the following 546-residue polypeptide: Phosphomethylpyrimidine synthase (546 aa).

Residues asparagine 145, methionine 174, tyrosine 203, histidine 239, 259–261 (SRG), 300–303 (DGLR), and glutamate 339 each bind substrate. Histidine 343 contacts Zn(2+). Residue tyrosine 366 coordinates substrate. Histidine 407 is a Zn(2+) binding site. 3 residues coordinate [4Fe-4S] cluster: cysteine 487, cysteine 490, and cysteine 495.

The protein belongs to the ThiC family. [4Fe-4S] cluster serves as cofactor.

The catalysed reaction is 5-amino-1-(5-phospho-beta-D-ribosyl)imidazole + S-adenosyl-L-methionine = 4-amino-2-methyl-5-(phosphooxymethyl)pyrimidine + CO + 5'-deoxyadenosine + formate + L-methionine + 3 H(+). It participates in cofactor biosynthesis; thiamine diphosphate biosynthesis. Catalyzes the synthesis of the hydroxymethylpyrimidine phosphate (HMP-P) moiety of thiamine from aminoimidazole ribotide (AIR) in a radical S-adenosyl-L-methionine (SAM)-dependent reaction. The sequence is that of Phosphomethylpyrimidine synthase from Mycobacterium marinum (strain ATCC BAA-535 / M).